The sequence spans 360 residues: COP9 signalosome complex subunit 5 (360 aa).

Residues 60–197 (AKISALALLK…IGAFRTYPKD (138 aa)) form the MPN domain. Residues His-143, His-145, and Asp-156 each coordinate Zn(2+). A JAMM motif motif is present at residues 143 to 156 (HSHPGYGCWLSGID). Disordered stretches follow at residues 293 to 315 (LMPS…RDSS) and 341 to 360 (SNKA…MVEA). Polar residues predominate over residues 341-350 (SNKASTSAPD).

It belongs to the peptidase M67A family. CSN5 subfamily. In terms of assembly, component of the CSN complex, probably composed of CSN1, CSN2, CSN3, CSN4, CSN5, CSN6, CSN7 and CSN8. Interacts with MCM2.

Functionally, probable protease subunit of the COP9 signalosome complex (CSN), a complex involved in various cellular and developmental processes such as photomorphogenesis and response to hormones. The CSN complex is an essential regulator of the ubiquitin (Ubl) conjugation pathway by mediating the deneddylation of the cullin subunits of SCF-type E3 ligase complexes, leading to decrease the Ubl ligase activity of SCF. Involved in early response to iron deficiency. In Oryza sativa subsp. japonica (Rice), this protein is COP9 signalosome complex subunit 5.